We begin with the raw amino-acid sequence, 98 residues long: Large ribosomal subunit protein uL23 (98 aa).

Belongs to the universal ribosomal protein uL23 family. In terms of assembly, part of the 50S ribosomal subunit. Contacts protein L29, and trigger factor when it is bound to the ribosome.

Its function is as follows. One of the early assembly proteins it binds 23S rRNA. One of the proteins that surrounds the polypeptide exit tunnel on the outside of the ribosome. Forms the main docking site for trigger factor binding to the ribosome. The chain is Large ribosomal subunit protein uL23 from Lactobacillus johnsonii (strain CNCM I-12250 / La1 / NCC 533).